An 89-amino-acid polypeptide reads, in one-letter code: Large ribosomal subunit protein bL27 (89 aa).

The interval 1–26 (MATKKAGGSSKNGRDSAGRRLGLKKT) is disordered.

Belongs to the bacterial ribosomal protein bL27 family.

This is Large ribosomal subunit protein bL27 from Orientia tsutsugamushi (strain Boryong) (Rickettsia tsutsugamushi).